A 153-amino-acid polypeptide reads, in one-letter code: Ribosome maturation factor RimP (153 aa).

This sequence belongs to the RimP family.

Its subcellular location is the cytoplasm. In terms of biological role, required for maturation of 30S ribosomal subunits. In Burkholderia mallei (strain NCTC 10229), this protein is Ribosome maturation factor RimP.